Here is a 238-residue protein sequence, read N- to C-terminus: Ribonuclease PH (238 aa).

Residues R86 and 124–126 (GTR) contribute to the phosphate site.

Belongs to the RNase PH family. In terms of assembly, homohexameric ring arranged as a trimer of dimers.

The catalysed reaction is tRNA(n+1) + phosphate = tRNA(n) + a ribonucleoside 5'-diphosphate. Its function is as follows. Phosphorolytic 3'-5' exoribonuclease that plays an important role in tRNA 3'-end maturation. Removes nucleotide residues following the 3'-CCA terminus of tRNAs; can also add nucleotides to the ends of RNA molecules by using nucleoside diphosphates as substrates, but this may not be physiologically important. Probably plays a role in initiation of 16S rRNA degradation (leading to ribosome degradation) during starvation. The protein is Ribonuclease PH of Vibrio parahaemolyticus serotype O3:K6 (strain RIMD 2210633).